Consider the following 336-residue polypeptide: Glycerol-3-phosphate dehydrogenase [NAD(P)+] (336 aa).

4 residues coordinate NADPH: S16, Y17, H37, and K111. Residues K111, G140, and T142 each coordinate sn-glycerol 3-phosphate. A144 is a binding site for NADPH. Sn-glycerol 3-phosphate-binding residues include K196, D249, S259, R260, and N261. K196 serves as the catalytic Proton acceptor. An NADPH-binding site is contributed by R260. NADPH contacts are provided by V284 and E286.

The protein belongs to the NAD-dependent glycerol-3-phosphate dehydrogenase family.

It is found in the cytoplasm. The catalysed reaction is sn-glycerol 3-phosphate + NAD(+) = dihydroxyacetone phosphate + NADH + H(+). It carries out the reaction sn-glycerol 3-phosphate + NADP(+) = dihydroxyacetone phosphate + NADPH + H(+). It functions in the pathway membrane lipid metabolism; glycerophospholipid metabolism. In terms of biological role, catalyzes the reduction of the glycolytic intermediate dihydroxyacetone phosphate (DHAP) to sn-glycerol 3-phosphate (G3P), the key precursor for phospholipid synthesis. This chain is Glycerol-3-phosphate dehydrogenase [NAD(P)+], found in Actinobacillus pleuropneumoniae serotype 3 (strain JL03).